Reading from the N-terminus, the 698-residue chain is Long-chain-fatty-acid--CoA ligase 1 (698 aa).

N-acetylmethionine is present on M1. The residue at position 9 (Y9) is a 3'-nitrotyrosine. Residues 25 to 45 (LPTNTLMGFGAFAALTTFWYA) traverse the membrane as a helical; Signal-anchor for type III membrane protein segment. At 46-698 (TRPKPLKPPC…IDDLYSTIKV (653 aa)) the chain is on the cytoplasmic side. Position 84 is a phosphotyrosine (Y84). O-linked (GlcNAc) serine glycosylation occurs at S135. An N6-acetyllysine mark is found at K207, K356, and K386. Phosphoserine is present on S620. At K632 the chain carries N6-acetyllysine.

Belongs to the ATP-dependent AMP-binding enzyme family. Requires Mg(2+) as cofactor. In terms of tissue distribution, highly expressed in liver, heart, skeletal muscle, kidney and erythroid cells, and to a lesser extent in brain, lung, placenta and pancreas.

It localises to the mitochondrion outer membrane. The protein localises to the peroxisome membrane. The protein resides in the microsome membrane. Its subcellular location is the endoplasmic reticulum membrane. It carries out the reaction a long-chain fatty acid + ATP + CoA = a long-chain fatty acyl-CoA + AMP + diphosphate. The enzyme catalyses (5Z,8Z,11Z,14Z)-eicosatetraenoate + ATP + CoA = (5Z,8Z,11Z,14Z)-eicosatetraenoyl-CoA + AMP + diphosphate. It catalyses the reaction 3,7,11,15-tetramethylhexadecanoate + ATP + CoA = phytanoyl-CoA + AMP + diphosphate. The catalysed reaction is hexadecanoate + ATP + CoA = hexadecanoyl-CoA + AMP + diphosphate. It carries out the reaction (E)-hexadec-2-enoate + ATP + CoA = (2E)-hexadecenoyl-CoA + AMP + diphosphate. The enzyme catalyses 2,6,10,14-tetramethylpentadecanoate + ATP + CoA = pristanoyl-CoA + AMP + diphosphate. It catalyses the reaction 14,15-epoxy-(5Z,8Z,11Z)-eicosatrienoate + ATP + CoA = 14,15-epoxy-(5Z,8Z,11Z)-eicosatrienoyl-CoA + AMP + diphosphate. The catalysed reaction is 5-hydroxy-(6E,8Z,11Z,14Z)-eicosatetraenoate + ATP + CoA = 5-hydroxy-(6E,8Z,11Z,14Z)-eicosatetraenoyl-CoA + AMP + diphosphate. It carries out the reaction 12-hydroxy-(5Z,8Z,10E,14Z)-eicosatetraenoate + ATP + CoA = 12-hydroxy-(5Z,8Z,10E,14Z)-eicosatetraenoyl-CoA + AMP + diphosphate. The enzyme catalyses 15-hydroxy-(5Z,8Z,11Z,13E)-eicosatetraenoate + ATP + CoA = 15-hydroxy-(5Z,8Z,11Z,13E)-eicosatetraenoyl-CoA + AMP + diphosphate. It catalyses the reaction (9Z)-octadecenoate + ATP + CoA = (9Z)-octadecenoyl-CoA + AMP + diphosphate. With respect to regulation, inhibited at high temperature and by arachidonate. In terms of biological role, catalyzes the conversion of long-chain fatty acids to their active form acyl-CoAs for both synthesis of cellular lipids, and degradation via beta-oxidation. Preferentially uses palmitoleate, oleate and linoleate. Preferentially activates arachidonate than epoxyeicosatrienoic acids (EETs) or hydroxyeicosatrienoic acids (HETEs). The sequence is that of Long-chain-fatty-acid--CoA ligase 1 from Homo sapiens (Human).